The following is a 277-amino-acid chain: MGILLDGKPVAKMIYAEIKEWLGNLQEKPPKLVLFCSEPDDSTKTYMNSIVKRGGKLGISVEICHAGENPVEEIKKLNESRDVAGVMIMHPLKNVDEKLVVSALSLEKDVEGRTPGNLGGIMTGDESFAPPTAEAVMEILRFYDVSLSGKDVTIVGRSTTVGKPLSMLMLKKGIDATVTICHSRTKNLVEKIKRANVLVSAVGRAGFITKEMVGKDSIIIDVGINLYDGKIVGDVDFEQVEPEVAAITPVPGGVGIVTTAILFRHFMVSSRRMVGRR.

Residues 156 to 158 (GRS), S183, and I224 contribute to the NADP(+) site.

Belongs to the tetrahydrofolate dehydrogenase/cyclohydrolase family. In terms of assembly, homodimer.

The enzyme catalyses (6R)-5,10-methylene-5,6,7,8-tetrahydrofolate + NADP(+) = (6R)-5,10-methenyltetrahydrofolate + NADPH. It catalyses the reaction (6R)-5,10-methenyltetrahydrofolate + H2O = (6R)-10-formyltetrahydrofolate + H(+). It participates in one-carbon metabolism; tetrahydrofolate interconversion. Catalyzes the oxidation of 5,10-methylenetetrahydrofolate to 5,10-methenyltetrahydrofolate and then the hydrolysis of 5,10-methenyltetrahydrofolate to 10-formyltetrahydrofolate. This Kosmotoga olearia (strain ATCC BAA-1733 / DSM 21960 / TBF 19.5.1) protein is Bifunctional protein FolD.